The sequence spans 420 residues: MSDAIAKDAVNTSSEKEPVSATPELKTSGSPDAAVSSGDKKKKKKKKKTNNIKNIALLYPDEKYPEGEWMDYHQDFNLQRTTDEEKRYLTRDAENQQRWNDMRKGAEIHRRVRKNLQNKLKPDMTLTEVVNIVENATRKFTGVDENGDHVDRPKSQGVGFPTGVSLNHCAAHFTPNAGDQTVLRYEDVMKVDIGVQVNGYIVDSAWTVAFDPKYDNLLQAVREATNTGVREAGIDVRLTDIGEAIQEVMESYEVELNGKTHQVKPCRNLCGHNIAPYRIHGGKSVPIVKNGDQTKMEEGEHFAIETFGSTGRGFVVPGGEVSHYAKSAEADGLPAPSLSRAKSLLKTIDENFGTLPFCRRYLDRLGEDKYLFALNSLVKHGIVQDYPPLNDVQGSYTAQFEHTILLHPHRKEVVSRGEDY.

The disordered stretch occupies residues 1–48 (MSDAIAKDAVNTSSEKEPVSATPELKTSGSPDAAVSSGDKKKKKKKKK). Position 172 (H172) interacts with substrate. A divalent metal cation is bound by residues D192, D203, and H272. H280 is a substrate binding site. A divalent metal cation contacts are provided by E305 and E401.

It belongs to the peptidase M24A family. Methionine aminopeptidase eukaryotic type 2 subfamily. Requires Co(2+) as cofactor. Zn(2+) is required as a cofactor. Mn(2+) serves as cofactor. The cofactor is Fe(2+).

The protein resides in the cytoplasm. The catalysed reaction is Release of N-terminal amino acids, preferentially methionine, from peptides and arylamides.. Functionally, cotranslationally removes the N-terminal methionine from nascent proteins. The N-terminal methionine is often cleaved when the second residue in the primary sequence is small and uncharged (Met-Ala-, Cys, Gly, Pro, Ser, Thr, or Val). This Lachancea thermotolerans (strain ATCC 56472 / CBS 6340 / NRRL Y-8284) (Yeast) protein is Methionine aminopeptidase 2.